The sequence spans 88 residues: uncharacterized protein (88 aa).

It localises to the host cytoplasm. This is an uncharacterized protein from Escherichia phage Mu (Bacteriophage Mu).